The sequence spans 975 residues: Exocyst complex component 4 (975 aa).

An N-acetylalanine modification is found at alanine 2. Lysine 9 bears the N6-acetyllysine mark. Serine 32 carries the post-translational modification Phosphoserine. Residues 32–114 are a coiled coil; sequence STSDDVEDRE…HCKRDELRKL (83 aa). Basic and acidic residues predominate over residues 211–224; the sequence is RNKEKGKMSSHGKD. The disordered stretch occupies residues 211 to 230; it reads RNKEKGKMSSHGKDPSPGPL. Residue serine 226 is modified to Phosphoserine. Position 238 is a phosphothreonine (threonine 238). Serine 469 carries the phosphoserine modification.

The protein belongs to the SEC8 family. As to quaternary structure, the exocyst complex is composed of EXOC1, EXOC2, EXOC3, EXOC4, EXOC5, EXOC6, EXOC7 and EXOC8. Interacts with BIRC6/bruce. Interacts with MYRIP. Interacts with SH3BP1; required for the localization of both SH3BP1 and the exocyst to the leading edge of migrating cells. Interacts with SLC6A9. Expressed in the striatum (at protein level).

It localises to the midbody. It is found in the midbody ring. The protein localises to the cell projection. The protein resides in the cytoplasm. Its subcellular location is the cytoskeleton. It localises to the microtubule organizing center. It is found in the centrosome. In terms of biological role, component of the exocyst complex involved in the docking of exocytic vesicles with fusion sites on the plasma membrane. This chain is Exocyst complex component 4 (Exoc4), found in Mus musculus (Mouse).